The primary structure comprises 517 residues: Nicotine N-demethylase CYP82E4 (517 aa).

The chain crosses the membrane as a helical span at residues 2–22 (LSPIEAIVGLVTFTFLFYFLW). Lys254 is covalently cross-linked (Glycyl lysine isopeptide (Lys-Gly) (interchain with G-Cter in ubiquitin)). Cys457 provides a ligand contact to heme.

Belongs to the cytochrome P450 family. CYP82E2 subfamily. It depends on heme as a cofactor. In terms of tissue distribution, expressed in leaves.

It localises to the membrane. It catalyses the reaction (S)-nicotine + reduced [NADPH--hemoprotein reductase] + O2 = (S)-nornicotine + formaldehyde + oxidized [NADPH--hemoprotein reductase] + H2O + H(+). Its pathway is alkaloid biosynthesis; nicotine biosynthesis. Its function is as follows. Involved in the biosynthesis of pyridine alkaloid natural products, leading mainly to the production of anabasine, anatabine, nicotine and nornicotine, effective deterrents against herbivores with antiparasitic and pesticide properties (neurotoxins); nornicotine serves as the precursor in the synthesis of the carcinogen compound N'-nitrosonornicotine (NNN). Catalyzes the demethylation of nicotine to form nornicotine. In Nicotiana tomentosiformis (Tobacco), this protein is Nicotine N-demethylase CYP82E4.